We begin with the raw amino-acid sequence, 513 residues long: Na(+)/H(+) antiporter NhaB (513 aa).

12 helical membrane-spanning segments follow: residues 23-43 (LALI…PFVA), 52-72 (IFTL…LLAI), 97-117 (LLLM…LFIF), 120-140 (LLLS…AAAF), 144-164 (FLDA…FYGI), 202-222 (LMMH…VGEP), 238-258 (FFLR…LTCL), 303-323 (AIIG…VGLI), 348-368 (TESL…AVII), 391-411 (LFYI…VGTI), 447-467 (ATPN…APLI), and 475-495 (VWMA…CVEF).

The protein belongs to the NhaB Na(+)/H(+) (TC 2.A.34) antiporter family.

The protein localises to the cell inner membrane. The catalysed reaction is 2 Na(+)(in) + 3 H(+)(out) = 2 Na(+)(out) + 3 H(+)(in). In terms of biological role, na(+)/H(+) antiporter that extrudes sodium in exchange for external protons. The chain is Na(+)/H(+) antiporter NhaB from Escherichia coli (strain 55989 / EAEC).